A 159-amino-acid polypeptide reads, in one-letter code: RNA pyrophosphohydrolase (159 aa).

The 144-residue stretch at 6–149 (GFRPNVGIIL…KREVYRRALK (144 aa)) folds into the Nudix hydrolase domain. A Nudix box motif is present at residues 38–59 (GGINDRETPEEALYRELNEEVG).

Belongs to the Nudix hydrolase family. RppH subfamily. A divalent metal cation serves as cofactor.

Functionally, accelerates the degradation of transcripts by removing pyrophosphate from the 5'-end of triphosphorylated RNA, leading to a more labile monophosphorylated state that can stimulate subsequent ribonuclease cleavage. This Pseudomonas aeruginosa (strain LESB58) protein is RNA pyrophosphohydrolase.